The sequence spans 780 residues: E3 SUMO-protein ligase gei-17 (780 aa).

The tract at residues 181–210 (APLHSSFPNHGRSSQQSLQKSEKSNRPKKM) is disordered. Positions 203–367 (KSNRPKKMYA…AAGVYFVHRV (165 aa)) constitute a PINIT domain. The segment at 400–485 (GEDDIAMDRL…LAKVDKNTTE (86 aa)) adopts an SP-RING-type zinc-finger fold. 4 residues coordinate Zn(2+): Cys-431, His-433, Cys-454, and Cys-457. The segment covering 519–530 (GTASCSSTNGNG) has biased composition (polar residues). Disordered regions lie at residues 519–544 (GTASCSSTNGNGLANEAAKKKPADDD), 560–594 (IMNSLNDSFSPGRHTASAELAAQKTPPQQKKKTKD), and 732–755 (QQHHLQQQQQQQQSPQIMSPSFYA). Over residues 732 to 749 (QQHHLQQQQQQQQSPQIM) the composition is skewed to low complexity.

The protein belongs to the PIAS family. In terms of assembly, may interact with gex-3.

Its pathway is protein modification; protein sumoylation. Functions as an E3-type smo-1 ligase. Mediates smo-1 conjugation to air-2 in vitro and is required for proper chromosome alignment. In the early embryo, specifically suppresses checkpoint activation in response to DNA damage, maybe by promoting mus-101 sumoylation. In embryos, plays a role in determining telomere localization in the nucleus. Acts with pie-1 to promote piRNA-mediated silencing and fertility in the adult germline. This Caenorhabditis elegans protein is E3 SUMO-protein ligase gei-17.